The sequence spans 275 residues: Ribosomal protein L11 methyltransferase (275 aa).

S-adenosyl-L-methionine is bound by residues threonine 130, glycine 151, aspartate 172, and asparagine 213.

This sequence belongs to the methyltransferase superfamily. PrmA family.

It is found in the cytoplasm. The enzyme catalyses L-lysyl-[protein] + 3 S-adenosyl-L-methionine = N(6),N(6),N(6)-trimethyl-L-lysyl-[protein] + 3 S-adenosyl-L-homocysteine + 3 H(+). In terms of biological role, methylates ribosomal protein L11. The sequence is that of Ribosomal protein L11 methyltransferase from Wolinella succinogenes (strain ATCC 29543 / DSM 1740 / CCUG 13145 / JCM 31913 / LMG 7466 / NCTC 11488 / FDC 602W) (Vibrio succinogenes).